Consider the following 474-residue polypeptide: Aspartyl/glutamyl-tRNA(Asn/Gln) amidotransferase subunit B (474 aa).

The protein belongs to the GatB/GatE family. GatB subfamily. As to quaternary structure, heterotrimer of A, B and C subunits.

It carries out the reaction L-glutamyl-tRNA(Gln) + L-glutamine + ATP + H2O = L-glutaminyl-tRNA(Gln) + L-glutamate + ADP + phosphate + H(+). The enzyme catalyses L-aspartyl-tRNA(Asn) + L-glutamine + ATP + H2O = L-asparaginyl-tRNA(Asn) + L-glutamate + ADP + phosphate + 2 H(+). Functionally, allows the formation of correctly charged Asn-tRNA(Asn) or Gln-tRNA(Gln) through the transamidation of misacylated Asp-tRNA(Asn) or Glu-tRNA(Gln) in organisms which lack either or both of asparaginyl-tRNA or glutaminyl-tRNA synthetases. The reaction takes place in the presence of glutamine and ATP through an activated phospho-Asp-tRNA(Asn) or phospho-Glu-tRNA(Gln). This is Aspartyl/glutamyl-tRNA(Asn/Gln) amidotransferase subunit B from Wolbachia pipientis wMel.